The primary structure comprises 1328 residues: Myb-binding protein 1A (1328 aa).

The disordered stretch occupies residues 1–22 (MESRDPAQPMSPGEATQSGARP). An interaction with MYB region spans residues 1–582 (MESRDPAQPM…WDRMLQTLKE (582 aa)). Position 11 is a phosphoserine (Ser11). Lys71 and Lys158 each carry N6-acetyllysine. Short sequence motifs (nuclear export signal) lie at residues 240–258 (SDENVPRLVNVLKMAASSV) and 263–281 (KLPAIALDLLRLALKEDKF). Residues 698–753 (SEDENDRVVVTDDSDERRLKGAEDKSEEGEDNRSSESEEESEGEESEEEERDGDVD) form a disordered region. The span at 703–721 (DRVVVTDDSDERRLKGAED) shows a compositional bias: basic and acidic residues. Positions 734 to 752 (SEEESEGEESEEEERDGDV) are enriched in acidic residues. Residue Ser775 is modified to Phosphoserine. Residues 1146–1292 (RPKLEKKDAK…KKGVLGKSPL (147 aa)) are disordered. Positions 1147–1156 (PKLEKKDAKE) are enriched in basic and acidic residues. Residue Lys1148 forms a Glycyl lysine isopeptide (Lys-Gly) (interchain with G-Cter in SUMO2) linkage. The segment at 1151-1328 (KKDAKEIPSA…KAQVRKAGKP (178 aa)) is required for nuclear and nucleolar localization. Ser1159 and Ser1163 each carry phosphoserine. Residues 1166-1184 (SKKRKKKGFLPETKKRKKR) show a composition bias toward basic residues. Residue Ser1186 is modified to Phosphoserine. Phosphothreonine is present on residues Thr1190 and Thr1196. Phosphoserine is present on Ser1207. Over residues 1209–1218 (GRKKRNRTKA) the composition is skewed to basic residues. Ser1232 is modified (phosphoserine). A Phosphothreonine modification is found at Thr1239. Ser1241 carries the phosphoserine modification. Thr1244 is modified (phosphothreonine). 2 positions are modified to phosphoserine: Ser1248 and Ser1267. Thr1269 bears the Phosphothreonine mark. Phosphoserine occurs at positions 1290 and 1303. Positions 1306–1328 (IRSPSLLQSGAKKKAQVRKAGKP) are disordered. Arg1307 bears the Citrulline mark. Ser1308, Ser1310, and Ser1314 each carry phosphoserine. The segment covering 1316–1328 (AKKKAQVRKAGKP) has biased composition (basic residues).

Belongs to the MYBBP1A family. Binds to and represses JUN and MYB via the leucine zipper regions present in these proteins. Also binds to and represses PPARGC1A: this interaction is abrogated when PPARGC1A is phosphorylated by MAPK1/ERK. Binds to and stimulates transcription by AHR. Binds to KPNA2. Interacts with CLOCK and CRY1. Component of the B-WICH complex, at least composed of SMARCA5/SNF2H, BAZ1B/WSTF, SF3B1, DEK, MYO1C, ERCC6, MYBBP1A and DDX21. Post-translationally, citrullinated by PADI4.

The protein localises to the cytoplasm. Its subcellular location is the nucleus. The protein resides in the nucleolus. Its function is as follows. May activate or repress transcription via interactions with sequence specific DNA-binding proteins. Repression may be mediated at least in part by histone deacetylase activity (HDAC activity). Acts as a corepressor and in concert with CRY1, represses the transcription of the core circadian clock component PER2. Preferentially binds to dimethylated histone H3 'Lys-9' (H3K9me2) on the PER2 promoter. Has a role in rRNA biogenesis together with PWP1. In Homo sapiens (Human), this protein is Myb-binding protein 1A (MYBBP1A).